The following is a 309-amino-acid chain: Calcium homeostasis modulator protein 5 (309 aa).

Over 1-15 (MDAFQGILKFFLNQK) the chain is Cytoplasmic. Lysine 15, arginine 32, and valine 37 together coordinate a 1,2-diacyl-sn-glycero-3-phosphate. A helical membrane pass occupies residues 16 to 37 (TVIGYSFMALLTVGSERLFSVV). Residues 38-45 (AFKCPCST) lie on the Extracellular side of the membrane. 3 disulfide bridges follow: cysteine 41/cysteine 127, cysteine 43/cysteine 158, and cysteine 142/cysteine 149. A helical transmembrane segment spans residues 46-70 (ENMTYGLVFLFAPAWVLLILGFFLN). The Cytoplasmic segment spans residues 71–99 (NRSWRLFTGCCVNPRKIFPRGHSCRFFYV). The chain crosses the membrane as a helical span at residues 100-129 (LGQITLSSLVAPVMWLSVALLNGTFYECAM). 2 residues coordinate a 1,2-diacyl-sn-glycero-3-phosphate: glutamine 102 and asparagine 121. At 130-174 (SGTRSSGLLELICKGKPKECWEELHKVSCGKTSMLPTVNEELKLS) the chain is on the extracellular side. Residues 175–200 (LQAQSQILGWCLICSASFFSLLTTCY) traverse the membrane as a helical segment. Over 201 to 309 (ARCRSKVSYL…MVLVGTAHNM (109 aa)) the chain is Cytoplasmic. Arginine 202 serves as a coordination point for a 1,2-diacyl-sn-glycero-3-phosphate.

This sequence belongs to the CALHM family. As to quaternary structure, oligomerizes to form undecameric cone-shaped channels.

Its subcellular location is the membrane. Its function is as follows. May assemble to form large pore channels with gating and ion conductance likely regulated by membrane lipids. This chain is Calcium homeostasis modulator protein 5, found in Homo sapiens (Human).